Reading from the N-terminus, the 144-residue chain is Large ribosomal subunit protein uL16 (144 aa).

Belongs to the universal ribosomal protein uL16 family. Part of the 50S ribosomal subunit.

Functionally, binds 23S rRNA and is also seen to make contacts with the A and possibly P site tRNAs. This chain is Large ribosomal subunit protein uL16, found in Oceanobacillus iheyensis (strain DSM 14371 / CIP 107618 / JCM 11309 / KCTC 3954 / HTE831).